Reading from the N-terminus, the 233-residue chain is Cell number regulator 8 (233 aa).

2 helical membrane passes run 85–101 and 115–138; these read VCLL…GSNV and CLPY…APWF.

The protein belongs to the cornifelin family. Expressed in roots, coleoptiles, leaves, stalks, apical meristems, immature ears, embryos, endosperm, pericarp, silks, tassel spikelets and pollen. Highest expression in the pericarp and stalks.

The protein localises to the membrane. The polypeptide is Cell number regulator 8 (CNR8) (Zea mays (Maize)).